A 652-amino-acid chain; its full sequence is Na(+)/H(+) antiporter NhaA 1 (652 aa).

A na(+)/H(+) antiporter NhaA region spans residues 1-427 (MTGELPRGRR…VGASLTTWLV (427 aa)). 11 helical membrane passes run 27–47 (AFLHTETGSARVLLAAAVVAL), 78–98 (LRYWVNSGLMTFFFLVIGLEV), 114–134 (TLPLLAGIGGILVPIAIYLAF), 142–162 (VGWGVVMATDTALALGMLAVL), 173–193 (FLLTVAVVDDLIVIAVLAIAY), 200–220 (TALFVAAGIFALVLLIRAAGG), 227–247 (LLLGVAAWLAVSESGVDPVVV), 312–332 (LIVPLFALANVGVVVDGELLA), 343–363 (VLFAYVVGKPAGIVIASMLVA), 376–396 (WAAIIGVGTVSGIGFTIALLI), and 411–431 (IGILVATVGASLTTWLVFRLA). The region spanning 428–623 (FRLAARLPPA…LSAAVTSAFA (196 aa)) is the Thioredoxin domain. The disordered stretch occupies residues 626–652 (RLRPRDDREPDRRREVGSEQPDEEPGT). A compositionally biased stretch (basic and acidic residues) spans 628 to 642 (RPRDDREPDRRREVG).

In the N-terminal section; belongs to the NhaA Na(+)/H(+) (TC 2.A.33) antiporter family.

It is found in the cell membrane. It catalyses the reaction Na(+)(in) + 2 H(+)(out) = Na(+)(out) + 2 H(+)(in). Its function is as follows. Na(+)/H(+) antiporter that extrudes sodium in exchange for external protons. The sequence is that of Na(+)/H(+) antiporter NhaA 1 from Salinispora arenicola (strain CNS-205).